The following is a 202-amino-acid chain: Na(+)-translocating NADH-quinone reductase subunit E (202 aa).

Transmembrane regions (helical) follow at residues 11-31 (AVFI…FIAI), 35-55 (VETA…TVPA), 79-99 (LSFL…QILE), 114-134 (GVFL…LFMV), 144-164 (VVYG…LAGI), and 180-200 (LGIT…FSGV).

It belongs to the NqrDE/RnfAE family. Composed of six subunits; NqrA, NqrB, NqrC, NqrD, NqrE and NqrF.

Its subcellular location is the cell inner membrane. The catalysed reaction is a ubiquinone + n Na(+)(in) + NADH + H(+) = a ubiquinol + n Na(+)(out) + NAD(+). NQR complex catalyzes the reduction of ubiquinone-1 to ubiquinol by two successive reactions, coupled with the transport of Na(+) ions from the cytoplasm to the periplasm. NqrA to NqrE are probably involved in the second step, the conversion of ubisemiquinone to ubiquinol. The chain is Na(+)-translocating NADH-quinone reductase subunit E from Stutzerimonas stutzeri (strain A1501) (Pseudomonas stutzeri).